A 184-amino-acid polypeptide reads, in one-letter code: MGLEEKLPSGFLLTTVEQAAGWVRKSSVFPATFGLACCAIEMMTTGAGRYDLARFGMEVFRGSPRQADLMIVAGRVSQKMAPVLRQVYDQMPNPKWVISMGVCASSGGMFNNYAIVQGVDHVVPVDIYLPGCPPRPEMLMDAILKLHQKIQSSKLGVNAEEAAREAEEAALKALPTIEMKGLLR.

4 residues coordinate [4Fe-4S] cluster: C37, C38, C103, and C132.

The protein belongs to the complex I 20 kDa subunit family. In terms of assembly, NDH-1 is composed of 14 different subunits. Subunits NuoB, C, D, E, F, and G constitute the peripheral sector of the complex. It depends on [4Fe-4S] cluster as a cofactor.

It is found in the cell membrane. The enzyme catalyses a quinone + NADH + 5 H(+)(in) = a quinol + NAD(+) + 4 H(+)(out). Functionally, NDH-1 shuttles electrons from NADH, via FMN and iron-sulfur (Fe-S) centers, to quinones in the respiratory chain. The immediate electron acceptor for the enzyme in this species is believed to be a menaquinone. Couples the redox reaction to proton translocation (for every two electrons transferred, four hydrogen ions are translocated across the cytoplasmic membrane), and thus conserves the redox energy in a proton gradient. This chain is NADH-quinone oxidoreductase subunit B 1, found in Streptomyces coelicolor (strain ATCC BAA-471 / A3(2) / M145).